A 314-amino-acid chain; its full sequence is 1-aminocyclopropane-1-carboxylate oxidase 1 (314 aa).

Residues 153 to 253 (PNFGTKVSNY…RMSIASFYNP (101 aa)) enclose the Fe2OG dioxygenase domain. Fe cation contacts are provided by H177, D179, and H234.

The protein belongs to the iron/ascorbate-dependent oxidoreductase family. In terms of assembly, monomer. The cofactor is Fe cation.

The catalysed reaction is 1-aminocyclopropane-1-carboxylate + L-ascorbate + O2 = ethene + L-dehydroascorbate + hydrogen cyanide + CO2 + 2 H2O. It functions in the pathway alkene biosynthesis; ethylene biosynthesis via S-adenosyl-L-methionine; ethylene from S-adenosyl-L-methionine: step 2/2. The protein is 1-aminocyclopropane-1-carboxylate oxidase 1 of Malus domestica (Apple).